Here is a 324-residue protein sequence, read N- to C-terminus: tRNA dimethylallyltransferase (324 aa).

An ATP-binding site is contributed by 15-22; sequence GPTATGKS. 17-22 provides a ligand contact to substrate; sequence TATGKS. Residues 40 to 43 form an interaction with substrate tRNA region; it reads DSAQ.

Belongs to the IPP transferase family. In terms of assembly, monomer. Requires Mg(2+) as cofactor.

The enzyme catalyses adenosine(37) in tRNA + dimethylallyl diphosphate = N(6)-dimethylallyladenosine(37) in tRNA + diphosphate. Catalyzes the transfer of a dimethylallyl group onto the adenine at position 37 in tRNAs that read codons beginning with uridine, leading to the formation of N6-(dimethylallyl)adenosine (i(6)A). The chain is tRNA dimethylallyltransferase from Moorella thermoacetica (strain ATCC 39073 / JCM 9320).